A 151-amino-acid polypeptide reads, in one-letter code: UPF0178 protein Pfl01_5469 (151 aa).

Belongs to the UPF0178 family.

This chain is UPF0178 protein Pfl01_5469, found in Pseudomonas fluorescens (strain Pf0-1).